Consider the following 1112-residue polypeptide: DNA polymerase II large subunit (1112 aa).

This sequence belongs to the archaeal DNA polymerase II family. Heterodimer of a large subunit and a small subunit.

The enzyme catalyses DNA(n) + a 2'-deoxyribonucleoside 5'-triphosphate = DNA(n+1) + diphosphate. It carries out the reaction Exonucleolytic cleavage in the 3'- to 5'-direction to yield nucleoside 5'-phosphates.. In terms of biological role, possesses two activities: a DNA synthesis (polymerase) and an exonucleolytic activity that degrades single-stranded DNA in the 3'- to 5'-direction. Has a template-primer preference which is characteristic of a replicative DNA polymerase. This is DNA polymerase II large subunit from Cenarchaeum symbiosum (strain A).